The primary structure comprises 280 residues: Eukaryotic translation initiation factor 3 subunit F-1 (280 aa).

The MPN domain occupies 8 to 138 (VRVHPVVLFQ…LRAYVCIQLG (131 aa)).

Belongs to the eIF-3 subunit F family. Component of the eukaryotic translation initiation factor 3 (eIF-3) complex. The eIF-3 complex interacts with pix.

The protein resides in the cytoplasm. Functionally, component of the eukaryotic translation initiation factor 3 (eIF-3) complex, which is involved in protein synthesis of a specialized repertoire of mRNAs and, together with other initiation factors, stimulates binding of mRNA and methionyl-tRNAi to the 40S ribosome. The eIF-3 complex specifically targets and initiates translation of a subset of mRNAs involved in cell proliferation. The protein is Eukaryotic translation initiation factor 3 subunit F-1 of Drosophila yakuba (Fruit fly).